Here is a 697-residue protein sequence, read N- to C-terminus: Ion-translocating oxidoreductase complex subunit C (697 aa).

4Fe-4S ferredoxin-type domains lie at 366–397 and 407–436; these read AEMG…QQLY and KARN…VQYY. 8 residues coordinate [4Fe-4S] cluster: Cys377, Cys380, Cys383, Cys387, Cys416, Cys419, Cys422, and Cys426. A disordered region spans residues 576–674; it reads AQLESEPVKS…APEEDPRKAA (99 aa). Over residues 581–596 the composition is skewed to basic and acidic residues; it reads EPVKSESEAPEEDPRK. Positions 597–615 are enriched in low complexity; that stretch reads AAVAAAIARVKAKKAAQAQ. A compositionally biased stretch (basic and acidic residues) spans 619-634; that stretch reads EPVKSESEAPEEDPRK. A compositionally biased stretch (low complexity) spans 635-653; it reads AAVAAAIARVKAKKAAQAQ. Residues 657 to 672 show a composition bias toward basic and acidic residues; sequence EPVKSESEAPEEDPRK.

This sequence belongs to the 4Fe4S bacterial-type ferredoxin family. RnfC subfamily. The complex is composed of six subunits: RnfA, RnfB, RnfC, RnfD, RnfE and RnfG. [4Fe-4S] cluster serves as cofactor.

Its subcellular location is the cell inner membrane. Part of a membrane-bound complex that couples electron transfer with translocation of ions across the membrane. The polypeptide is Ion-translocating oxidoreductase complex subunit C (Yersinia enterocolitica serotype O:8 / biotype 1B (strain NCTC 13174 / 8081)).